Here is a 329-residue protein sequence, read N- to C-terminus: Type 2 lactosamine alpha-2,3-sialyltransferase (329 aa).

Over 1–4 (MKGY) the chain is Cytoplasmic. A helical; Signal-anchor for type II membrane protein membrane pass occupies residues 5 to 25 (LVAIFLSSIFLYYVLYCILWG). Over 26–329 (TNGYWFPAEE…IKKKMVINLT (304 aa)) the chain is Lumenal. 4 N-linked (GlcNAc...) asparagine glycosylation sites follow: Asn129, Asn181, Asn295, and Asn308.

Belongs to the glycosyltransferase 29 family.

The protein localises to the golgi apparatus membrane. It carries out the reaction a neolactoside nLc4Cer(d18:1(4E)) + CMP-N-acetyl-beta-neuraminate = a neolactoside IV(3)-alpha-NeuAc-nLc4Cer(d18:1(4E)) + CMP + H(+). The catalysed reaction is a beta-D-galactosyl-(1-&gt;4)-N-acetyl-beta-D-glucosaminyl derivative + CMP-N-acetyl-beta-neuraminate = an N-acetyl-alpha-neuraminyl-(2-&gt;3)-beta-D-galactosyl-(1-&gt;4)-N-acetyl-beta-D-glucosaminyl derivative + CMP + H(+). It catalyses the reaction a neolactoside nLc6Cer(d18:1(4E)) + CMP-N-acetyl-beta-neuraminate = a neolactoside VI(3)-alpha-NeuNAc-nLc6Cer(d18:1(4E)) + CMP + H(+). Its function is as follows. Transfers the sialyl residue from CMP-N-acetyl-beta-neuraminate to the terminal galactose residue on sugar chains of glycoproteins and glycolipids. It's alpha-2,3-sialyltransferase activity is specific toward type II glycan chains (Galbeta1-4GlcNAc) on glycoproteins and glycolipids such as neolactosides nLc4Cer and nLc6Cer, whose sialyl-products serve as precursors for the Lewis X antigen. Critically involved in the synthesis of functional selectin ligands needed for neutrophil recruitment during inflammation and lymphocyte homing to the lymph nodes. The polypeptide is Type 2 lactosamine alpha-2,3-sialyltransferase (St3gal6) (Mus musculus (Mouse)).